Here is a 113-residue protein sequence, read N- to C-terminus: Large ribosomal subunit protein uL22 (113 aa).

Belongs to the universal ribosomal protein uL22 family. Part of the 50S ribosomal subunit.

Functionally, this protein binds specifically to 23S rRNA; its binding is stimulated by other ribosomal proteins, e.g. L4, L17, and L20. It is important during the early stages of 50S assembly. It makes multiple contacts with different domains of the 23S rRNA in the assembled 50S subunit and ribosome. Its function is as follows. The globular domain of the protein is located near the polypeptide exit tunnel on the outside of the subunit, while an extended beta-hairpin is found that lines the wall of the exit tunnel in the center of the 70S ribosome. The chain is Large ribosomal subunit protein uL22 from Bacillus mycoides (strain KBAB4) (Bacillus weihenstephanensis).